We begin with the raw amino-acid sequence, 410 residues long: E3 ubiquitin-protein ligase PRT1 (410 aa).

2 consecutive RING-type zinc fingers follow at residues 26 to 66 and 192 to 232; these read CCVC…PICR and CSAC…QECN. The ZZ-type zinc finger occupies 306–370; it reads HFGAGCDSCG…RLELARSPQV (65 aa). 8 residues coordinate Zn(2+): Cys311, Cys314, Cys326, Cys329, Cys338, Cys341, His356, and His360. The tract at residues 385 to 410 is disordered; that stretch reads ISNEGMDTDEGEEGPPGSSNESSSTE. A compositionally biased stretch (low complexity) spans 399–410; it reads PPGSSNESSSTE.

It localises to the cytoplasm. The catalysed reaction is S-ubiquitinyl-[E2 ubiquitin-conjugating enzyme]-L-cysteine + [acceptor protein]-L-lysine = [E2 ubiquitin-conjugating enzyme]-L-cysteine + N(6)-ubiquitinyl-[acceptor protein]-L-lysine.. Its pathway is protein modification; protein ubiquitination. Its function is as follows. E3 ubiquitin-protein ligase that mediates ubiquitination and subsequent proteasomal degradation of target proteins. Functions in the N-end rule pathway of protein degradation, where it specifically recognizes and ubiquitinates proteins with a N-terminal bulky aromatic amino acid (Phe). Does not act on aliphatic hydrophobic and basic N-terminal residues (Arg or Leu) containing proteins. In Arabidopsis thaliana (Mouse-ear cress), this protein is E3 ubiquitin-protein ligase PRT1 (PRT1).